Here is a 55-residue protein sequence, read N- to C-terminus: Large ribosomal subunit protein bL33 (55 aa).

The protein belongs to the bacterial ribosomal protein bL33 family.

The sequence is that of Large ribosomal subunit protein bL33 from Azorhizobium caulinodans (strain ATCC 43989 / DSM 5975 / JCM 20966 / LMG 6465 / NBRC 14845 / NCIMB 13405 / ORS 571).